Here is a 77-residue protein sequence, read N- to C-terminus: uncharacterized protein (77 aa).

This is an uncharacterized protein from Bacillus licheniformis.